The primary structure comprises 373 residues: Zinc finger protein CONSTANS (373 aa).

A B box-type 1; atypical zinc finger spans residues 15-57; that stretch reads NRARPCDTCRSNACTVYCHADSAYLCMSCDAQVHSANRVASRH. 8 residues coordinate Zn(2+): Cys20, Cys23, Cys43, His48, Cys63, Cys66, Cys86, and His91. The B box-type 2; atypical zinc-finger motif lies at 58–108; sequence KRVRVCESCERAPAAFLCEADDASLCTACDSEVHSANPLARRHQRVPILPI. Over residues 109 to 120 the composition is skewed to polar residues; the sequence is SGNSFSSMTTTH. The tract at residues 109–130 is disordered; it reads SGNSFSSMTTTHHQSEKTMTDP. Positions 121-130 are enriched in basic and acidic residues; the sequence is HQSEKTMTDP. The 43-residue stretch at 306 to 348 folds into the CCT domain; the sequence is REARVLRYREKRKTRKFEKTIRYASRKAYAEIRPRVNGRFAKR.

The protein belongs to the CONSTANS family. As to quaternary structure, interacts with ADO3, SPA1, SPA2, SPA3 and SPA4. Interacts with MRG1 and MRG2 (via MRG domain). Interacts (via B-box) with MIP1A. Interacts with AS1 to form a functional complex regulating FT expression. Interacts with NFYC9. Component of a red light-dependent nuclear complex made of PHL, PHYB and CO. Interacts directly with PHL in the presence of PHYB. In terms of tissue distribution, expressed in leaves, shoots and shoot apical meristem. Detected in the vascular tissue of the hypocotyl, the cotyledons and the leaves. Restricted to the protoxylem and phloem in young inflorescence stems and to the phloem only in older inflorescences. Also detected in the vascular tissue of the root.

The protein localises to the nucleus. Its function is as follows. Transcription factor that acts in the long day flowering pathway and may mediate between the circadian clock and the control of flowering. Plays a role in the regulation of flowering time by acting on 'SUPPRESSOR OF OVEREXPRESSION OF CO1', 'TERMINAL FLOWER 1' and 'FLOWERING LOCUS T'. Also regulates P5CS2 and ACS10 (involved in proline and ethylene biosynthesis, respectively). Regulates the expression of NAKR1 by binding to the 5'-TGTG(N2-3)ATG-3' motif. The sequence is that of Zinc finger protein CONSTANS from Arabidopsis thaliana (Mouse-ear cress).